The chain runs to 265 residues: Ribosomal RNA small subunit methyltransferase A (265 aa).

Positions 13, 15, 40, 62, 87, and 106 each coordinate S-adenosyl-L-methionine.

This sequence belongs to the class I-like SAM-binding methyltransferase superfamily. rRNA adenine N(6)-methyltransferase family. RsmA subfamily.

Its subcellular location is the cytoplasm. It catalyses the reaction adenosine(1518)/adenosine(1519) in 16S rRNA + 4 S-adenosyl-L-methionine = N(6)-dimethyladenosine(1518)/N(6)-dimethyladenosine(1519) in 16S rRNA + 4 S-adenosyl-L-homocysteine + 4 H(+). Functionally, specifically dimethylates two adjacent adenosines (A1518 and A1519) in the loop of a conserved hairpin near the 3'-end of 16S rRNA in the 30S particle. May play a critical role in biogenesis of 30S subunits. The sequence is that of Ribosomal RNA small subunit methyltransferase A from Persephonella marina (strain DSM 14350 / EX-H1).